We begin with the raw amino-acid sequence, 285 residues long: Eukaryotic translation initiation factor 2 subunit beta (285 aa).

The disordered stretch occupies residues 30–69 (DAAVNGKENGSGDDLFAGLKKKKKKSKSVSADAEAEKEPT). Serine 40 bears the Phosphoserine mark. Threonine 69 is modified (phosphothreonine). Serine 80, serine 92, and serine 112 each carry phosphoserine. The residue at position 116 (threonine 116) is a Phosphothreonine. Serine 118 carries the post-translational modification Phosphoserine. Residues 236–262 (CKTCKSINTELKREQSNRLFFMVCKSC) form a C4-type zinc finger.

The protein belongs to the eIF-2-beta/eIF-5 family. Eukaryotic translation initiation factor 2 eIF2 is a heterotrimeric complex composed of an alpha, a beta and a gamma subunit. The factors eIF-1, eIF-2, eIF-3, TIF5/eIF-5 and methionyl-tRNAi form a multifactor complex (MFC) that may bind to the 40S ribosome. Interacts with GCD6. Interacts with GCD1. Interacts with TIF5/eIF-5. Interacts with CDC123.

The protein resides in the cytoplasm. The protein localises to the cytosol. Component of the eIF2 complex that functions in the early steps of protein synthesis by forming a ternary complex with GTP and initiator tRNA. This complex binds to a 40S ribosomal subunit, followed by mRNA binding to form a 43S pre-initiation complex (43S PIC). Junction of the 60S ribosomal subunit to form the 80S initiation complex is preceded by hydrolysis of the GTP bound to eIF2 and release of an eIF2-GDP binary complex. In order for eIF2 to recycle and catalyze another round of initiation, the GDP bound to eIF2 must exchange with GTP by way of a reaction catalyzed by eIF2B. This chain is Eukaryotic translation initiation factor 2 subunit beta (SUI3), found in Saccharomyces cerevisiae (strain ATCC 204508 / S288c) (Baker's yeast).